The primary structure comprises 133 residues: MAVPLLTKKVVKKRSAKFIRPQSDRRITVKESWRRPKGIDSRVRRKFKGVTLMPNVGYGSDKKTRHYLPNGFKKFIVHNTSELELLMMHNRTYCAEIAHNISTKKRKAIVERASQLDVVVSNKLGRLRSQEDE.

It belongs to the eukaryotic ribosomal protein eL32 family.

This Arabidopsis thaliana (Mouse-ear cress) protein is Large ribosomal subunit protein eL32y (RPL32B).